The primary structure comprises 127 residues: Ribosome-binding factor A (127 aa).

Belongs to the RbfA family. Monomer. Binds 30S ribosomal subunits, but not 50S ribosomal subunits or 70S ribosomes.

It is found in the cytoplasm. Functionally, one of several proteins that assist in the late maturation steps of the functional core of the 30S ribosomal subunit. Associates with free 30S ribosomal subunits (but not with 30S subunits that are part of 70S ribosomes or polysomes). Required for efficient processing of 16S rRNA. May interact with the 5'-terminal helix region of 16S rRNA. This is Ribosome-binding factor A from Aromatoleum aromaticum (strain DSM 19018 / LMG 30748 / EbN1) (Azoarcus sp. (strain EbN1)).